Consider the following 828-residue polypeptide: Periplasmic nitrate reductase (828 aa).

A signal peptide (tat-type signal) is located at residues 1–31 (MKLSRRSFMKANAVAAAAAAAGLSVPGVARA). Residues 39–95 (IKWDKAPCRFCGTGCGVLVGTQQGRVVACQGDPDAPVNRGLNCIKGYFLPKIMYGKD) enclose the 4Fe-4S Mo/W bis-MGD-type domain. Positions 46, 49, 53, and 81 each coordinate [4Fe-4S] cluster. Mo-bis(molybdopterin guanine dinucleotide) is bound by residues lysine 83, glutamine 150, asparagine 175, cysteine 179, 212–219 (WGANMAEM), 243–247 (STYQH), 262–264 (QSD), methionine 372, glutamine 376, asparagine 482, 508–509 (SD), lysine 531, aspartate 558, and 718–727 (TGRVLEHWHT). Phenylalanine 794 serves as a coordination point for substrate. Mo-bis(molybdopterin guanine dinucleotide)-binding residues include asparagine 802 and lysine 819.

It belongs to the prokaryotic molybdopterin-containing oxidoreductase family. NasA/NapA/NarB subfamily. Component of the periplasmic nitrate reductase NapAB complex composed of NapA and NapB. [4Fe-4S] cluster serves as cofactor. It depends on Mo-bis(molybdopterin guanine dinucleotide) as a cofactor. Post-translationally, predicted to be exported by the Tat system. The position of the signal peptide cleavage has not been experimentally proven.

It is found in the periplasm. It catalyses the reaction 2 Fe(II)-[cytochrome] + nitrate + 2 H(+) = 2 Fe(III)-[cytochrome] + nitrite + H2O. In terms of biological role, catalytic subunit of the periplasmic nitrate reductase complex NapAB. Receives electrons from NapB and catalyzes the reduction of nitrate to nitrite. The chain is Periplasmic nitrate reductase from Escherichia coli O6:K15:H31 (strain 536 / UPEC).